We begin with the raw amino-acid sequence, 330 residues long: uncharacterized protein (330 aa).

Helical transmembrane passes span M27–G47, V56–F76, V90–Y110, E119–L139, T147–G167, L176–A196, L206–F226, Y243–V263, V270–L290, and F294–I314. EamA domains lie at A38 to L163 and I187 to I314.

Belongs to the EamA transporter family.

Its subcellular location is the cell membrane. This is an uncharacterized protein from Bacillus subtilis (strain 168).